A 1886-amino-acid chain; its full sequence is Polyprotein P3 (1886 aa).

3 disordered regions span residues 1-24 (MATR…SGVP), 420-466 (RCDS…MQDD), and 478-529 (RMKK…NQPE). Positions 9-20 (VTQTDGSRTATE) are enriched in polar residues. The span at 488–498 (QQALSSQAQEE) shows a compositional bias: low complexity. The CCHC-type zinc finger occupies 879 to 896 (CKCYICGQEGHYANQCRN). Residues 1215–1292 (INAIVDTGAT…GLSPGIQMII (78 aa)) enclose the Peptidase A2 domain. Catalysis depends on aspartate 1220, which acts as the For protease activity. Residues 1425 to 1615 (LLQMKVIRPS…PEIDFLGASL (191 aa)) enclose the Reverse transcriptase domain. An RNase H type-1 domain is found at 1706-1841 (KDSFIIIETD…ADALSRMINF (136 aa)). Residues aspartate 1715, glutamate 1758, aspartate 1784, and aspartate 1833 each coordinate Mg(2+).

Post-translationally, polyprotein P3 is presumably proteolytically cleaved into several chains by viral protease.

The enzyme catalyses Endonucleolytic cleavage to 5'-phosphomonoester.. It carries out the reaction DNA(n) + a 2'-deoxyribonucleoside 5'-triphosphate = DNA(n+1) + diphosphate. Capsid protein self assembles to form a bacilliform capsid about 90-900 nm in length. The capsid encapsulates the genomic dsDNA. Following virus entry into host cell, provides nuclear import of the viral genome. Virus particles do not enter the nucleus, but are targeted to the nuclear membrane through the interaction with host importins. The sequence is that of Polyprotein P3 from Commelina yellow mottle virus (CoYMV).